The following is a 500-amino-acid chain: Kynurenine 3-monooxygenase acdD (500 aa).

FAD contacts are provided by residues valine 17 and 36–38 (ELR). An N-linked (GlcNAc...) asparagine glycan is attached at asparagine 50. Alanine 58 provides a ligand contact to FAD. Arginine 89 and tyrosine 106 together coordinate L-kynurenine. Positions 118 and 143 each coordinate FAD. Asparagine 163 carries an N-linked (GlcNAc...) asparagine glycan. FAD is bound by residues aspartate 321 and 332–335 (QGLN). L-kynurenine-binding residues include asparagine 392 and tyrosine 428. Residues 451 to 471 (LLLYGSISAIISSAAIVGVLA) form a helical membrane-spanning segment.

Belongs to the aromatic-ring hydroxylase family. KMO subfamily. FAD is required as a cofactor.

The protein localises to the mitochondrion outer membrane. It catalyses the reaction L-kynurenine + NADPH + O2 + H(+) = 3-hydroxy-L-kynurenine + NADP(+) + H2O. Its pathway is secondary metabolite biosynthesis. The protein operates within cofactor biosynthesis; NAD(+) biosynthesis; quinolinate from L-kynurenine: step 1/3. In terms of biological role, indoleamine 2,3-dioxygenase; part of the gene cluster that mediates the biosynthesis of aspcandine, a pyrrolobenzazepine alkaloid. Initially, the indoleamine 2,3-dioxygenase acdA accepts L-tryptophan and performs the oxidative opening of the indole ring to yield N'-formyl-L-kynurenine, which undergoes the spontaneous deformylation reaction to provide L-kynurenine. The kynurenine 3-monooxygenase acdD then hydroxylates L-kynurenine to afford 3-hydroxy-L-kynurenine. 3-hydroxy-L-kynurenine is activated by the A domain of the NRPS-PKS acdB and subsequently loaded onto the enzyme. The KS domain conducts the decarboxylative condensation of the 3-hydroxy-L-kynurenyl and malonyl moieties, and subsequent nucleophilic attacks by the two amino groups would occur nonenzymatically at two distinct positions, achieving the chain release and the construction of the tricyclic system. Finally, the dehydration reaction completes the biosynthesis to yield aspcandine. This chain is Kynurenine 3-monooxygenase acdD, found in Aspergillus candidus.